The chain runs to 410 residues: Mating-type locus allele B3 protein (410 aa).

Residues 1-110 (MSRDPKLSLS…ANVVSPGEGC (110 aa)) form a variable domain between B alleles region. Positions 107-184 (GEGCRNLSED…NARRRSGWSH (78 aa)) form a DNA-binding region, homeobox; TALE-type. The highly conserved between B alleles stretch occupies residues 111-410 (RNLSEDLPAY…PFLCLSVAFV (300 aa)). Disordered regions lie at residues 203–224 (AKLS…PSDD) and 278–335 (TPKP…TPEL). Polar residues predominate over residues 205–219 (LSSSNQSTPPSLTSE). Residues 276 to 308 (KKTPKPGMPRPVTTVAKRHPARKTKPAAKPKSR) carry the Nuclear localization signal motif. A compositionally biased stretch (basic residues) spans 291 to 307 (AKRHPARKTKPAAKPKS). Residues 312–335 (PRASTTPSIDSTLDSSKLESTPEL) show a composition bias toward polar residues. Positions 333–410 (PELSMCSTAD…PFLCLSVAFV (78 aa)) are not essential for B3 function.

It belongs to the TALE/M-ATYP homeobox family.

The protein resides in the nucleus. In terms of biological role, the B locus has at least 25 alleles, and any combination of two different B alleles yields a multimeric regulatory protein, that activates genes responsible for the pathogenicity and for the sexual development of the fungus within the corn plant. This is Mating-type locus allele B3 protein from Mycosarcoma maydis (Corn smut fungus).